The primary structure comprises 345 residues: MSLTYRDAGVDIDEGDRLVDLIKPHARPTLRPEVLGGIGGFGGLFALDVKKYREPVLVSGTDGVGTKLKVAFAADRHDTVGIDLVAMCVNDIAVVGAEPLFFLDYYATGKLSAEQGAEVVKGIAEGCRQAGCALIGGETAELPGFYARGEYDLAGFAVGCVDRPRIVDGTRVARGDVVIGIASSGLHSNGFSLARKALLDRYPLDHRFEGLGGRTLADALLEPTRIYAKDVLALLDQVPVRAFAHITGGGLPGNVPRTLPDGTRAVLEEKRWPRPAIFDVVEREGQVPRDEMYRTFNMGLGLVAVVAPGDEAAAHAALRARGLEAWTVGAIEAGGPGEATCEVVR.

Belongs to the AIR synthase family.

It is found in the cytoplasm. It carries out the reaction 2-formamido-N(1)-(5-O-phospho-beta-D-ribosyl)acetamidine + ATP = 5-amino-1-(5-phospho-beta-D-ribosyl)imidazole + ADP + phosphate + H(+). The protein operates within purine metabolism; IMP biosynthesis via de novo pathway; 5-amino-1-(5-phospho-D-ribosyl)imidazole from N(2)-formyl-N(1)-(5-phospho-D-ribosyl)glycinamide: step 2/2. The protein is Phosphoribosylformylglycinamidine cyclo-ligase of Anaeromyxobacter dehalogenans (strain 2CP-C).